We begin with the raw amino-acid sequence, 224 residues long: Fibronectin type III domain-containing protein 9 (224 aa).

One can recognise a Fibronectin type-III domain in the interval Met-1 to Ala-101. A helical transmembrane segment spans residues Leu-113 to Leu-133. The disordered stretch occupies residues Leu-175–Glu-224. A compositionally biased stretch (basic and acidic residues) spans Met-183–Ala-192.

Its subcellular location is the membrane. This chain is Fibronectin type III domain-containing protein 9 (FNDC9), found in Homo sapiens (Human).